Here is a 431-residue protein sequence, read N- to C-terminus: Indole diterpene prenyltransferase nodD1 (431 aa).

Residue 85 to 86 coordinates L-tryptophan; that stretch reads FI. Positions 107, 194, 268, 270, 272, and 353 each coordinate substrate.

The protein belongs to the tryptophan dimethylallyltransferase family.

It participates in secondary metabolite biosynthesis. Indole diterpene prenyltransferase; part of the gene cluster that mediates the biosynthesis of the indole diterpenes nodulisporic acids (NA). Nodulisporic acid A (NAA) and its chemically modified derivatives are of particular significance because of their highly potent insecticidal activity against blood-feeding arthropods and lack of observable adverse effects on mammals, in particular the tremogenicity associated with the paspaline-derived IDTs is not observed. The geranylgeranyl diphosphate (GGPP) synthase ggs1, localized outside of the cluster, is proposed to catalyze the first step in nodulisporic acid biosynthesis via conversion of farnesyl pyrophosphate and isopentyl pyrophosphate into geranylgeranyl pyrophosphate (GGPP). Condensation of indole-3-glycerol phosphate with GGPP by the prenyl transferase nodC then forms 3-geranylgeranylindole (3-GGI). Epoxidation by the FAD-dependent monooxygenase nodM leads to a single-epoxidized-GGI that is substrate of the terpene cyclase nodB for cyclization to yield emindole SB. The terminal methyl carbon, C28, of emindole SB is then oxidized by the cytochrome P450 monooxygenase nodW to produce nodulisporic acid F (NAF), the pentacyclic core of NAA. NAF is converted to nodulisporic acid E (NAE) via prenylation. This step is probably performed by one of the indole diterpene prenyltransferases nodD1 or nodD2. Several oxidation steps performed by the FAD-linked oxidoreductase nodO and one of the cytochrome P450 monooxygenase nodR, nodX or nodZ further convert NAE to nodulisporic acid D (NAD). NAD is substrate of cytochrome P450 monooxygenase nodJ to produce the precursor of nodulisporic acid C (NAC), converted to NAC by one of the indole diterpene prenyltransferases nodD1 or nodD2. The FAD-dependent monooxygenase nodY2 then oxidizes NAC to nodulisporic acid B (NAB). Finally NAB is converted to NAA by one of the cytochrome P450 monooxygenases nodR, nodX or nodZ. The polypeptide is Indole diterpene prenyltransferase nodD1 (Hypoxylon pulicicidum).